We begin with the raw amino-acid sequence, 265 residues long: MEEFVDVAIEAAKKAGEIIRHGFYKSKHIEHKGVVDLVTETDKACEVLIFNHLKQCFPSHKFIGEETTAAASGNFELTDEPTWIVDPLDGTTNFVHGFPFVCVSIGLTIEKKPVVGVVYNPIIDELFTAIYGRGAFLNGKSIRVSSESQLVKALVATEVGTNRDKAIVDATTGRINRVIFKVRSLRMSGSCALNLCGVACGRLDLFYEIEFGGPWDVAAGALIVIEAGGLVLDPSGSEFDLTARRVAATNAHLKDAFINALNESE.

4 residues coordinate Mg(2+): Glu65, Asp86, Leu88, and Asp89. Glu65 contributes to the substrate binding site. Residues 88 to 91 (LDGT), 189 to 191 (GSC), Glu208, and Asp216 each bind substrate. Asp216 is a binding site for Mg(2+).

The protein belongs to the inositol monophosphatase superfamily. Mg(2+) serves as cofactor. In terms of tissue distribution, low expression in roots, stems, leaves, flowers and young and mature green fruits. Expressed in the stem/leaf junctions, below the shoot apex and on the abaxial side of the petiole of the first expanded leaflets.

It carries out the reaction a myo-inositol phosphate + H2O = myo-inositol + phosphate. The protein operates within polyol metabolism; myo-inositol biosynthesis; myo-inositol from D-glucose 6-phosphate: step 2/2. In terms of biological role, responsible for the provision of inositol required for synthesis of phosphatidylinositol and polyphosphoinositides. The sequence is that of Inositol monophosphatase 2 (IMP2) from Solanum lycopersicum (Tomato).